A 95-amino-acid chain; its full sequence is Aspartyl/glutamyl-tRNA(Asn/Gln) amidotransferase subunit C (95 aa).

The protein belongs to the GatC family. In terms of assembly, heterotrimer of A, B and C subunits.

It catalyses the reaction L-glutamyl-tRNA(Gln) + L-glutamine + ATP + H2O = L-glutaminyl-tRNA(Gln) + L-glutamate + ADP + phosphate + H(+). It carries out the reaction L-aspartyl-tRNA(Asn) + L-glutamine + ATP + H2O = L-asparaginyl-tRNA(Asn) + L-glutamate + ADP + phosphate + 2 H(+). In terms of biological role, allows the formation of correctly charged Asn-tRNA(Asn) or Gln-tRNA(Gln) through the transamidation of misacylated Asp-tRNA(Asn) or Glu-tRNA(Gln) in organisms which lack either or both of asparaginyl-tRNA or glutaminyl-tRNA synthetases. The reaction takes place in the presence of glutamine and ATP through an activated phospho-Asp-tRNA(Asn) or phospho-Glu-tRNA(Gln). The chain is Aspartyl/glutamyl-tRNA(Asn/Gln) amidotransferase subunit C from Cereibacter sphaeroides (strain ATCC 17025 / ATH 2.4.3) (Rhodobacter sphaeroides).